The following is a 627-amino-acid chain: Lipid-A-disaccharide synthase (627 aa).

The interval 1–224 (MFPLYLVRLL…IYKKSRLSEF (224 aa)) is unknown. Residues 225–627 (HNPSYFISAG…YVQKNVRPSF (403 aa)) form a lipid-A-disaccharide synthase region.

It in the C-terminal section; belongs to the LpxB family.

The catalysed reaction is a lipid X + a UDP-2-N,3-O-bis[(3R)-3-hydroxyacyl]-alpha-D-glucosamine = a lipid A disaccharide + UDP + H(+). The protein operates within bacterial outer membrane biogenesis; LPS lipid A biosynthesis. Condensation of UDP-2,3-diacylglucosamine and 2,3-diacylglucosamine-1-phosphate to form lipid A disaccharide, a precursor of lipid A, a phosphorylated glycolipid that anchors the lipopolysaccharide to the outer membrane of the cell. This is Lipid-A-disaccharide synthase (lpxB) from Chlamydia abortus (strain DSM 27085 / S26/3) (Chlamydophila abortus).